Reading from the N-terminus, the 848-residue chain is Neurofilament medium polypeptide (848 aa).

A compositionally biased stretch (polar residues) spans 1 to 10 (MSYTLDSLGN). The interval 1-51 (MSYTLDSLGNPSAYRRVTETRSSFSRVSGSPSSGFRSQSWSRGSPSTVSSS) is disordered. S2 carries the N-acetylserine modification. The segment at 2-102 (SYTLDSLGNP…KLSRSNEKEQ (101 aa)) is head. Residues 21-44 (RSSFSRVSGSPSSGFRSQSWSRGS) are compositionally biased toward low complexity. S30 carries the post-translational modification Phosphoserine. The residue at position 42 (R42) is an Omega-N-methylarginine. O-linked (GlcNAc) threonine glycosylation occurs at T47. S97 is modified (phosphoserine). An IF rod domain is found at 99–410 (EKEQLQGLND…KLLEGEETRF (312 aa)). The tract at residues 103–134 (LQGLNDRFAGYIEKVHYLEQQNKEIEAEIQAL) is coil 1A. The interval 135-147 (RQKQASHAQLGDA) is linker 1. Residues 148–246 (YDQEIRELRA…EEEVADLLAQ (99 aa)) form a coil 1B region. S224 carries the post-translational modification Phosphoserine. A linker 12 region spans residues 247 to 263 (IQASHITVERKDYLKTD). The tract at residues 264–285 (ISTALKEIRSQLECHSDQNMHQ) is coil 2A. Positions 286–289 (AEEW) are linker 2. The coil 2B stretch occupies residues 290–410 (FKCRYAKLTE…KLLEGEETRF (121 aa)). Phosphotyrosine is present on Y318. S344, S416, and S428 each carry phosphoserine. The tract at residues 411-848 (STFSGSITGP…AIVKEVTQGD (438 aa)) is tail. T430 is a glycosylation site (O-linked (GlcNAc) threonine). 2 positions are modified to phosphoserine: S466 and S482. The disordered stretch occupies residues 482–785 (SAKEEKEEAE…GEDSSDDKVV (304 aa)). A compositionally biased stretch (acidic residues) spans 488–498 (EEAEEKEEEPE). The segment covering 499 to 509 (AEKSPVKSPEA) has biased composition (basic and acidic residues). 2 positions are modified to phosphoserine: S502 and S506. Positions 510 to 533 (KEEEEEGEKEEEEEGQEEEEEEDE) are enriched in acidic residues. Residues 534 to 553 (GVKSDQAEEGGSEKEGSSEK) show a composition bias toward basic and acidic residues. A phosphoserine mark is found at S537, S545, S550, and S551. Positions 554–576 (DEGEQEEEEGETEAEGEGEEAEA) are enriched in acidic residues. T565 is modified (phosphothreonine). Over residues 577 to 604 (KEEKKIEGKVEEVAVKEEIKVEKPEKAK) the composition is skewed to basic and acidic residues. A phosphoserine mark is found at S605 and S610. Basic and acidic residues-rich tracts occupy residues 611 to 677 (PVEE…KAVE) and 689 to 711 (SLEKDTKEEKPQPQEKVKEKAEE). The residue at position 642 (T642) is a Phosphothreonine. Residues S645, S669, S689, S715, S723, S753, and S769 each carry the phosphoserine modification. Composition is skewed to basic and acidic residues over residues 720–732 (SDRSPQESKKEDI) and 748–760 (TQEKGSGREEEKG). A compositionally biased stretch (basic and acidic residues) spans 771-785 (AEEKKGEDSSDDKVV).

This sequence belongs to the intermediate filament family. As to quaternary structure, forms heterodimers with NEFL; which can further hetero-oligomerize (in vitro). Forms heterodimers with INA (in vitro). Post-translationally, there are a number of repeats of the tripeptide K-S-P, NFM is phosphorylated on a number of the serines in this motif. It is thought that phosphorylation of NFM results in the formation of interfilament cross bridges that are important in the maintenance of axonal caliber. Phosphorylation seems to play a major role in the functioning of the larger neurofilament polypeptides (NF-M and NF-H), the levels of phosphorylation being altered developmentally and coincidentally with a change in the neurofilament function. In terms of processing, phosphorylated in the head and rod regions by the PKC kinase PKN1, leading to the inhibition of polymerization. In terms of tissue distribution, expressed in the sciatic nerve (at protein level).

The protein resides in the cytoplasm. It is found in the cytoskeleton. It localises to the cell projection. The protein localises to the axon. In terms of biological role, neurofilaments usually contain three intermediate filament proteins: NEFL, NEFM, and NEFH which are involved in the maintenance of neuronal caliber. May additionally cooperate with the neuronal intermediate filament proteins PRPH and INA to form neuronal filamentous networks. This Mus musculus (Mouse) protein is Neurofilament medium polypeptide (Nefm).